Here is a 175-residue protein sequence, read N- to C-terminus: Protein FMP23, mitochondrial (175 aa).

The transit peptide at 1 to 38 (MLINHLSKIRTVRHFSNIKPVLSKEVSRRVIVAPASHF) directs the protein to the mitochondrion.

The protein resides in the mitochondrion. Functionally, may be involved in mitochondrial iron or copper homeostatis. The polypeptide is Protein FMP23, mitochondrial (FMP23) (Saccharomyces cerevisiae (strain ATCC 204508 / S288c) (Baker's yeast)).